The chain runs to 213 residues: Large ribosomal subunit protein uL3 (213 aa).

Position 151 is an N5-methylglutamine (Q151).

This sequence belongs to the universal ribosomal protein uL3 family. As to quaternary structure, part of the 50S ribosomal subunit. Forms a cluster with proteins L14 and L19. Methylated by PrmB.

One of the primary rRNA binding proteins, it binds directly near the 3'-end of the 23S rRNA, where it nucleates assembly of the 50S subunit. This chain is Large ribosomal subunit protein uL3, found in Rhizobium johnstonii (strain DSM 114642 / LMG 32736 / 3841) (Rhizobium leguminosarum bv. viciae).